We begin with the raw amino-acid sequence, 31 residues long: Zinc metalloproteinase alsophinase (31 aa).

Residue Gln1 is modified to Pyrrolidone carboxylic acid. One can recognise a Peptidase M12B domain in the interval 9–31; that stretch reads KYIEFYLVVDNGMFXKYSXXFTV. Residue Glu12 coordinates Ca(2+).

In terms of assembly, monomer. Zn(2+) is required as a cofactor. In terms of processing, contains 9 disulfide bonds. As to expression, expressed by the venom gland.

It is found in the secreted. Its activity is regulated as follows. Inhibited by 1,10-phenanthroline. Functionally, snake venom zinc metalloprotease that has potent hemorrhagic activity, fibrinogenolytic activity on the alpha-subunit of human fibrinogen (FGA) in vitro and provokes necrosis in skin, muscle and lung tissues. May contribute to local edema and ecchymosis induced by venom. Hydrolyzes model substrate (beta-chain of insulin) at Ala(14)-Leu(15). This chain is Zinc metalloproteinase alsophinase, found in Borikenophis portoricensis (Puerto Rican racer).